The following is a 220-amino-acid chain: Type IV major pilin protein PilA (220 aa).

Positions 1-12 (MRVSRFNPRNRG) are cleaved as a propeptide — leader sequence. Position 13 is an N-methylphenylalanine (phenylalanine 13). Residues 13 to 33 (FTLIELMIVVAIIGILAAIAI) form a helical membrane-spanning segment.

Belongs to the N-Me-Phe pilin family.

It localises to the fimbrium. The protein localises to the membrane. Its activity is regulated as follows. The two-component PilS2/PilR2 is required for proper assembly of T4P and regulation. Its function is as follows. Major component of the type IV pili that are required for social gliding motility through cycles of extension and retraction. Extended pili are composed of thousands of copies of PilA and retract upon binding to extracellular polysaccharides and thereby pull the cell forward. The protein is Type IV major pilin protein PilA (pilA) of Myxococcus xanthus (strain DK1622).